Reading from the N-terminus, the 228-residue chain is Ran-binding protein 1 homolog a (228 aa).

The segment covering 1 to 13 (MATNEPEHEHRDE) has biased composition (basic and acidic residues). Disordered regions lie at residues 1 to 30 (MATN…QVAP) and 159 to 228 (SEEE…GPST). Residues 14 to 24 (EEAGANEDEDT) show a composition bias toward acidic residues. The RanBD1 domain maps to 27-162 (QVAPIVRLEE…FKEVAESEEE (136 aa)). Positions 179–228 (LTVEETKTEEKTEAKAVETAKTEVKAEEKKESEAEKSGEAKKTEESGPST) are enriched in basic and acidic residues.

Interacts with the GTP-bound form of RAN1, RAN2 and RAN3. Ubiquitous. Preferentially expressed in root tips and gynoecium.

The protein resides in the nucleus. The protein localises to the nuclear pore complex. This is Ran-binding protein 1 homolog a (RANBP1A) from Arabidopsis thaliana (Mouse-ear cress).